The sequence spans 206 residues: Dephospho-CoA kinase (206 aa).

The DPCK domain occupies 4-200 (TVALTGGIGS…ASYLKLASQF (197 aa)). 12 to 17 (GSGKST) contributes to the ATP binding site.

This sequence belongs to the CoaE family.

The protein localises to the cytoplasm. It carries out the reaction 3'-dephospho-CoA + ATP = ADP + CoA + H(+). Its pathway is cofactor biosynthesis; coenzyme A biosynthesis; CoA from (R)-pantothenate: step 5/5. Functionally, catalyzes the phosphorylation of the 3'-hydroxyl group of dephosphocoenzyme A to form coenzyme A. The chain is Dephospho-CoA kinase from Salmonella paratyphi A (strain ATCC 9150 / SARB42).